A 147-amino-acid chain; its full sequence is Hemoglobin subunit delta (147 aa).

Residues 3-147 (HLTPDEKNAV…VATALAHKYH (145 aa)) form the Globin domain. At Ser-51 the chain carries Phosphoserine. Heme b-binding residues include His-64 and His-93.

Belongs to the globin family. In terms of assembly, heterotetramer of two delta chains and two alpha chains. Red blood cells.

This is Hemoglobin subunit delta (HBD) from Otolemur crassicaudatus (Brown greater galago).